Consider the following 297-residue polypeptide: Large ribosomal subunit protein uL24m (297 aa).

An N-acetylserine modification is found at S2. Residues 63-96 (FIPGDRVVVMSGASKGNIAVIKSFDKRTNSFILD) enclose the KOW domain.

This sequence belongs to the universal ribosomal protein uL24 family. Component of the mitochondrial large ribosomal subunit (mt-LSU). Mature yeast 74S mitochondrial ribosomes consist of a small (37S) and a large (54S) subunit. The 37S small subunit contains a 15S ribosomal RNA (15S mt-rRNA) and 34 different proteins. The 54S large subunit contains a 21S rRNA (21S mt-rRNA) and 46 different proteins. uL24m forms the wall of the exit tunnel.

The protein localises to the mitochondrion. Functionally, component of the mitochondrial ribosome (mitoribosome), a dedicated translation machinery responsible for the synthesis of mitochondrial genome-encoded proteins, including at least some of the essential transmembrane subunits of the mitochondrial respiratory chain. The mitoribosomes are attached to the mitochondrial inner membrane and translation products are cotranslationally integrated into the membrane. The polypeptide is Large ribosomal subunit protein uL24m (MRPL40) (Saccharomyces cerevisiae (strain ATCC 204508 / S288c) (Baker's yeast)).